The primary structure comprises 1047 residues: FACT complex subunit SPT16 (1047 aa).

A2 bears the N-acetylalanine mark. An N6-acetyllysine modification is found at K139. Phosphoserine is present on S188. K196 and K223 each carry N6-acetyllysine. S455 carries the phosphoserine modification. The stretch at R465–K507 forms a coiled coil. The tract at residues R491–M518 is disordered. Residue K497 forms a Glycyl lysine isopeptide (Lys-Gly) (interchain with G-Cter in SUMO2) linkage. The segment covering E499–N514 has biased composition (polar residues). S508 carries the phosphoserine modification. An N6-acetyllysine; alternate modification is found at K513. A Glycyl lysine isopeptide (Lys-Gly) (interchain with G-Cter in SUMO2); alternate cross-link involves residue K513. A Glycyl lysine isopeptide (Lys-Gly) (interchain with G-Cter in SUMO2) cross-link involves residue K647. 2 positions are modified to phosphoserine: S650 and S658. N6-acetyllysine occurs at positions 732 and 786. T903 bears the Phosphothreonine mark. An N6-acetyllysine modification is found at K904. The segment at E918–K1047 is disordered. The segment covering P927 to S973 has biased composition (acidic residues). Phosphoserine occurs at positions 979, 982, 986, and 1015. The segment covering E985–R1005 has biased composition (basic and acidic residues). Over residues V1024 to S1039 the composition is skewed to low complexity.

This sequence belongs to the peptidase M24 family. SPT16 subfamily. As to quaternary structure, interacts with MYOG (via C-terminal region). Component of the FACT complex, a stable heterodimer of SSRP1 and SUPT16H. Also a component of a CK2-SPT16-SSRP1 complex which forms following UV irradiation, composed of SSRP1, SUPT16H, CSNK2A1, CSNK2A2 and CSNK2B. Interacts with NEK9. Binds to histone H2A-H2B. Identified in a centromere complex containing histones H2A, H2B and H4, and at least CENPA, CENPB, CENPC, CENPT, CENPN, HJURP, SUPT16H, SSRP1 and RSF1. Interacts with GTF2E2. Post-translationally, ADP-ribosylated. ADP-ribosylation by PARP1 is induced by genotoxic stress and correlates with dissociation of FACT from chromatin. In terms of tissue distribution, widely expressed. Expressed in brain, liver, heart, kidneys, lungs, spleen, thymus, ovary, and testes, with highest levels of expression observed in thymus.

It is found in the nucleus. The protein resides in the chromosome. Its function is as follows. Component of the FACT complex, a general chromatin factor that acts to reorganize nucleosomes. The FACT complex is involved in multiple processes that require DNA as a template such as mRNA elongation, DNA replication and DNA repair. During transcription elongation the FACT complex acts as a histone chaperone that both destabilizes and restores nucleosomal structure. It facilitates the passage of RNA polymerase II and transcription by promoting the dissociation of one histone H2A-H2B dimer from the nucleosome, then subsequently promotes the reestablishment of the nucleosome following the passage of RNA polymerase II. The FACT complex is probably also involved in phosphorylation of 'Ser-392' of p53/TP53 via its association with CK2 (casein kinase II). The chain is FACT complex subunit SPT16 (Supt16h) from Mus musculus (Mouse).